Reading from the N-terminus, the 457-residue chain is Multidrug resistance protein MdtK (457 aa).

12 helical membrane passes run 11-31 (LLALAIPVVIAQLSQTAMGVV), 46-66 (AVAVGTSIWLPAILFGHGLLL), 93-113 (WLALCVSVLIMLVLYNSDHVI), 127-147 (AVGFLHAIMWGVPGYLFFQVL), 160-180 (GMVIGFVGLLVNIPINYIFIY), 188-208 (LGGVGCGVATASVYWVMFLMM), 243-263 (LPVALALFFEVTLFAVVALLV), 283-301 (LMFMLPMSLSVAATIRVGF), 316-336 (YTSMAVGLLLASVTAVFTIVF), 357-377 (LMLLAALYQLSDAVQVIGSGV), 387-407 (IFFITFTAYWLLGLPSGYLLG), and 418-438 (PAGFWIGFIIGLTAAAILMVL).

It belongs to the multi antimicrobial extrusion (MATE) (TC 2.A.66.1) family. MdtK subfamily.

The protein localises to the cell inner membrane. Functionally, multidrug efflux pump that functions probably as a Na(+)/drug antiporter. The protein is Multidrug resistance protein MdtK of Yersinia pseudotuberculosis serotype IB (strain PB1/+).